The primary structure comprises 111 residues: uncharacterized protein (111 aa).

The next 4 helical transmembrane spans lie at 4–21, 28–47, 51–73, and 80–102; these read FITA…FVSF, LVYF…YMIY, TGIR…VTAF, and SFFF…YLGM.

It localises to the cell membrane. This is an uncharacterized protein from Bacillus subtilis (strain 168).